The chain runs to 467 residues: H(+)/Cl(-) exchange transporter ClcA (467 aa).

At 1–30 (MTKRERIVKSVLAHVPKDAINQFVSRGSTP) the chain is on the cytoplasmic side. Residues 31-67 (FSVLIMAAIVGTLAGFVGTYFELAVHFVSETRTEWLR) form a helical membrane-spanning segment. At 68-74 (SEIGSVL) the chain is on the periplasmic side. A helical membrane pass occupies residues 75–98 (PLWLAAVLISALLAFIGYFLVHRF). Positions 104–108 (GSGIP) match the Selectivity filter part_1 motif. Position 105 (Ser-105) interacts with chloride. Positions 107–114 (IPEIEGAM) form an intramembrane region, helical. Residues 115–121 (DNIRPVR) lie on the Cytoplasmic side of the membrane. 2 consecutive transmembrane segments (helical) span residues 122–139 (WWRVLPVKFFGGMGALGS) and 146–164 (EGPTVQMGGAVGRMVTDIF). The short motif at 144 to 148 (GREGP) is the Selectivity filter part_2 element. Topologically, residues 165 to 174 (RVKDDDTRHS) are cytoplasmic. 2 intramembrane regions (helical) span residues 175–187 (LLASGAAGGLAAA) and 191–199 (PLAGIMFVV). Residues 200–212 (EEMRPQFRYSLIS) lie on the Cytoplasmic side of the membrane. Residues 213–230 (IRAVIISAIMANIVFRAI) form a helical membrane-spanning segment. At 231 to 250 (NGQDAVITMPQYQSPALQTL) the chain is on the periplasmic side. Residues 251–279 (WLFLLLGALFGVFGVIFNKLITVAQDSFV) form a helical membrane-spanning segment. The Cytoplasmic segment spans residues 280–285 (AIHKND). The chain crosses the membrane as a helical span at residues 286-307 (RKRYLITGSILGGVFGLLLLYV). Residues 308–327 (PQLTGGGIALIPDVTTGNYS) are Periplasmic-facing. The next 2 membrane-spanning stretches (helical) occupy residues 328 to 347 (ISILVLLFIGRVVTTLLCFG) and 353 to 374 (GIFAPMLALGTLFGYAFGASAD). Residues 353-357 (GIFAP) carry the Selectivity filter part_3 motif. Chloride contacts are provided by Ile-354 and Phe-355. Over 375-384 (VLLPTLDIEP) the chain is Periplasmic. The segment at residues 385-399 (GVFAIAGMGALFAAT) is an intramembrane region (helical). The note=Loop between two helices intramembrane region spans 400–402 (VRA). An intramembrane region (helical) is located at residues 403–414 (PITGILLVIEMT). An intramembrane region (note=Loop between two helices) is located at residues 415–419 (NNYYL). Residues 420–436 (ILPLIITCLGAVIVAQL) traverse the membrane as a helical segment. Residues 437–467 (LGGQPIYSQLLHRTLKNDKLRQQDLPENQAS) lie on the Cytoplasmic side of the membrane. Tyr-443 contributes to the chloride binding site.

It belongs to the chloride channel (TC 2.A.49) family. ClcA subfamily. Homodimer.

The protein resides in the cell inner membrane. The catalysed reaction is 2 chloride(in) + H(+)(out) = 2 chloride(out) + H(+)(in). In terms of biological role, proton-coupled chloride transporter. Functions as antiport system and exchanges two chloride ions for 1 proton. Probably acts as an electrical shunt for an outwardly-directed proton pump that is linked to amino acid decarboxylation, as part of the extreme acid resistance (XAR) response. This chain is H(+)/Cl(-) exchange transporter ClcA, found in Vibrio parahaemolyticus serotype O3:K6 (strain RIMD 2210633).